A 318-amino-acid polypeptide reads, in one-letter code: ADP-ribosyl cyclase/cyclic ADP-ribose hydrolase 2 (318 aa).

The N-terminal stretch at Met-1 to Ala-32 is a signal peptide. Intrachain disulfides connect Cys-51–Cys-67, Cys-83–Cys-163, and Cys-144–Cys-157. N-linked (GlcNAc...) asparagine glycosylation is found at Asn-66 and Asn-95. Trp-109 is an NAD(+) binding site. Trp-109 contributes to the nicotinamide binding site. Asn-148 carries N-linked (GlcNAc...) asparagine glycosylation. Trp-172 is a binding site for NAD(+). An N-linked (GlcNAc...) asparagine glycan is attached at Asn-192. An NAD(+)-binding site is contributed by Glu-210. 2 disulfide bridges follow: Cys-238–Cys-259 and Cys-271–Cys-280. Ala-293 is lipidated: GPI-anchor amidated alanine. Residues Pro-294–Leu-318 constitute a propeptide, removed in mature form.

It belongs to the ADP-ribosyl cyclase family. As to quaternary structure, homodimer. In terms of tissue distribution, expressed in various tissues including placenta, lung, liver and kidney.

The protein resides in the cell membrane. It catalyses the reaction NAD(+) + H2O = ADP-D-ribose + nicotinamide + H(+). The catalysed reaction is NAD(+) = cyclic ADP-beta-D-ribose + nicotinamide + H(+). The enzyme catalyses cyclic ADP-beta-D-ribose + H2O = ADP-D-ribose. With respect to regulation, ADP-ribosyl cyclase and cADPR hydrolase activities are both activated by Zn(2+) or Mn(2+), and inhibited by Cu(2+), while Mg(2+) and Ca(2+) do not have any significant influence. Its function is as follows. Catalyzes both the synthesis of cyclic ADP-beta-D-ribose (cADPR) from NAD(+), and its hydrolysis to ADP-D-ribose (ADPR). Cyclic ADPR is known to serve as an endogenous second messenger that elicits calcium release from intracellular stores, and thus regulates the mobilization of intracellular calcium. May be involved in pre-B-cell growth. The protein is ADP-ribosyl cyclase/cyclic ADP-ribose hydrolase 2 (BST1) of Homo sapiens (Human).